We begin with the raw amino-acid sequence, 263 residues long: Endonuclease 8 (263 aa).

Pro2 functions as the Schiff-base intermediate with DNA in the catalytic mechanism. Catalysis depends on Glu3, which acts as the Proton donor. The active-site Proton donor; for beta-elimination activity is Lys53. DNA contacts are provided by Gln70, Arg125, and Asn169. The FPG-type zinc finger occupies 229 to 263 (KVFHRDGERCERCGGIIEKTTLSSRPFYWCPGCQH). Arg253 functions as the Proton donor; for delta-elimination activity in the catalytic mechanism.

Belongs to the FPG family. The cofactor is Zn(2+).

It catalyses the reaction 2'-deoxyribonucleotide-(2'-deoxyribose 5'-phosphate)-2'-deoxyribonucleotide-DNA = a 3'-end 2'-deoxyribonucleotide-(2,3-dehydro-2,3-deoxyribose 5'-phosphate)-DNA + a 5'-end 5'-phospho-2'-deoxyribonucleoside-DNA + H(+). In terms of biological role, involved in base excision repair of DNA damaged by oxidation or by mutagenic agents. Acts as a DNA glycosylase that recognizes and removes damaged bases. Has a preference for oxidized pyrimidines, such as thymine glycol, 5,6-dihydrouracil and 5,6-dihydrothymine. Has AP (apurinic/apyrimidinic) lyase activity and introduces nicks in the DNA strand. Cleaves the DNA backbone by beta-delta elimination to generate a single-strand break at the site of the removed base with both 3'- and 5'-phosphates. The chain is Endonuclease 8 from Klebsiella pneumoniae subsp. pneumoniae (strain ATCC 700721 / MGH 78578).